A 1879-amino-acid polypeptide reads, in one-letter code: Protein TIC 214 (1879 aa).

Transmembrane regions (helical) follow at residues 18-38, 67-87, 90-110, 127-147, 175-195, and 218-238; these read IINSVVVVGLYYGFLTTFSIG, FITGQLMMFISIYYAPLHLAL, PHTITVLALPYLLFHFFWNNH, LSIQCVFLNNLIFQLFNHFIL, VGWLIGHILFMKWVGLVLVWI, and IFSILLFITCVYYLGRIPSPI. The tract at residues 243 to 291 is disordered; it reads LKETEERGESEEERDVEKTSETKGTKQEQEGSTEEDPSPSLFSEEKEDP. Basic and acidic residues predominate over residues 257 to 271; that stretch reads DVEKTSETKGTKQEQ.

Belongs to the TIC214 family. As to quaternary structure, part of the Tic complex.

It is found in the plastid. Its subcellular location is the chloroplast inner membrane. Functionally, involved in protein precursor import into chloroplasts. May be part of an intermediate translocation complex acting as a protein-conducting channel at the inner envelope. This is Protein TIC 214 from Morus indica (Mulberry).